A 1338-amino-acid polypeptide reads, in one-letter code: Apoptotic chromatin condensation inducer in the nucleus (1338 aa).

A disordered region spans residues 1-57 (MWGRKRPNSSGETRGILSGNRGVDYGSGRGQSGPFEGRWRKLPKMPEAVGTDPSTSR). In terms of domain architecture, SAP spans 72 to 106 (LQALRVTDLKAALEQRGLAKSGQKSALVKRLKGAL). Phosphoserine occurs at positions 132, 166, 169, 208, 210, and 216. The segment at 155–866 (EAREAAELEE…ATQKKPSISI (712 aa)) is disordered. Over residues 161–171 (ELEEASAESED) the composition is skewed to acidic residues. The segment covering 219–228 (EKPRKGERRS) has biased composition (basic and acidic residues). Ser242 bears the Phosphoserine mark. The residue at position 253 (Thr253) is a Phosphothreonine. Lys267 participates in a covalent cross-link: Glycyl lysine isopeptide (Lys-Gly) (interchain with G-Cter in SUMO1). Residues 269–290 (EEEEEEEEEEEDDDDEEEEEVD) are compositionally biased toward acidic residues. Ser295 carries the phosphoserine modification. Basic and acidic residues predominate over residues 313 to 353 (ERTRAKPEKVVDEKPLNIRSQEKGELEKGGRVTRSQEEARR). A Glycyl lysine isopeptide (Lys-Gly) (interchain with G-Cter in SUMO2) cross-link involves residue Lys318. Phosphoserine is present on residues Ser332 and Ser369. Residue Lys378 forms a Glycyl lysine isopeptide (Lys-Gly) (interchain with G-Cter in SUMO2) linkage. Ser387, Ser389, Ser391, and Ser413 each carry phosphoserine. 2 positions are modified to phosphothreonine: Thr417 and Thr423. Positions 425 to 434 (EASSPPTHIQ) are enriched in polar residues. Ser454, Ser477, Ser479, Ser491, and Ser497 each carry phosphoserine. Positions 506 to 518 (QKSSLPECSTQKG) are enriched in polar residues. A compositionally biased stretch (basic and acidic residues) spans 542–559 (ITEEPMKKQSLEQKEGRR). Ser561 bears the Phosphoserine mark. Low complexity-rich tracts occupy residues 573-603 (SADS…ASRP) and 646-662 (RSAS…GVSR). Position 654 is an N6,N6,N6-trimethyllysine; by EHMT2; alternate (Lys654). At Lys654 the chain carries N6,N6-dimethyllysine; by EHMT2; alternate. Phosphoserine occurs at positions 655, 657, 710, and 729. Lys732 is covalently cross-linked (Glycyl lysine isopeptide (Lys-Gly) (interchain with G-Cter in SUMO2)). Positions 744–754 (TQPQTSETQIS) are enriched in polar residues. Composition is skewed to basic and acidic residues over residues 757 to 767 (LESERTHHTVE) and 798 to 815 (NDER…KESS). A phosphoserine mark is found at Ser825 and Ser838. Polar residues predominate over residues 855–866 (TAATQKKPSISI). Lys861 carries the post-translational modification N6-acetyllysine; alternate. Lys861 is covalently cross-linked (Glycyl lysine isopeptide (Lys-Gly) (interchain with G-Cter in SUMO2); alternate). Lys879 is covalently cross-linked (Glycyl lysine isopeptide (Lys-Gly) (interchain with G-Cter in SUMO2)). Over residues 892–915 (ADDSRISEDETERNGDDGTHDKGL) the composition is skewed to basic and acidic residues. The tract at residues 892 to 950 (ADDSRISEDETERNGDDGTHDKGLKICRTVTQVVPAEGQENGQREEEEEKEPEAELPAP) is disordered. Phosphoserine is present on residues Ser895 and Ser898. Residues 936 to 945 (EEEEEKEPEA) show a composition bias toward acidic residues. Lys969 participates in a covalent cross-link: Glycyl lysine isopeptide (Lys-Gly) (interchain with G-Cter in SUMO2). At Thr975 the chain carries Phosphothreonine. Phosphoserine occurs at positions 986, 989, and 1003. Glycyl lysine isopeptide (Lys-Gly) (interchain with G-Cter in SUMO2) cross-links involve residues Lys1046 and Lys1106. Disordered stretches follow at residues 1104-1214 (ETKA…DDLF) and 1226-1338 (LPLT…GGRR). A compositionally biased stretch (pro residues) spans 1115-1129 (PLHPPPPPPVQPPPH). The segment covering 1130-1174 (PRAEQREQERAVREQWAEREREMERRERTRSEREWDRDKVREGPR) has biased composition (basic and acidic residues). Over residues 1175–1192 (SRSRSRDRRRKERAKSKE) the composition is skewed to basic residues. Residue Ser1179 is modified to Phosphoserine; by SRPK2 and PKB/AKT1. Composition is skewed to basic and acidic residues over residues 1193–1214 (KKSE…DDLF) and 1236–1317 (KEAE…DRRD). The tract at residues 1209 to 1236 (LLDDLFRKTKAAPCIYWLPLTESQIVQK) is sufficient for interaction with RNPS1 and SAP18 and formation of the ASAP complex.

As to quaternary structure, found in a mRNA splicing-dependent exon junction complex (EJC). Component of the heterotrimeric ASAP (apoptosis- and splicing-associated protein) complexes consisting of RNPS1, SAP18 and different isoforms of ACIN1; the association of SAP18 seems to require a preformed RNPS1:ACIN1 complex. Interacts with API5. Interacts with SRPK2 in a phosphorylation-dependent manner. Post-translationally, undergoes proteolytic cleavage; the processed form is active, contrary to the uncleaved form. Phosphorylation on Ser-1179 by SRPK2 up-regulates its stimulatory effect on cyclin A1.

It localises to the nucleus. The protein resides in the nucleus speckle. It is found in the nucleoplasm. In terms of biological role, auxiliary component of the splicing-dependent multiprotein exon junction complex (EJC) deposited at splice junction on mRNAs. The EJC is a dynamic structure consisting of core proteins and several peripheral nuclear and cytoplasmic associated factors that join the complex only transiently either during EJC assembly or during subsequent mRNA metabolism. Component of the ASAP complexes which bind RNA in a sequence-independent manner and are proposed to be recruited to the EJC prior to or during the splicing process and to regulate specific excision of introns in specific transcription subsets; ACIN1 confers RNA-binding to the complex. The ASAP complex can inhibit RNA processing during in vitro splicing reactions. The ASAP complex promotes apoptosis and is disassembled after induction of apoptosis. Involved in the splicing modulation of BCL2L1/Bcl-X (and probably other apoptotic genes); specifically inhibits formation of proapoptotic isoforms such as Bcl-X(S); the activity is different from the established EJC assembly and function. Induces apoptotic chromatin condensation after activation by CASP3. Regulates cyclin A1, but not cyclin A2, expression in leukemia cells. The sequence is that of Apoptotic chromatin condensation inducer in the nucleus (Acin1) from Mus musculus (Mouse).